The following is a 1123-amino-acid chain: Leucine--tRNA ligase, cytoplasmic (1123 aa).

The 'HIGH' region motif lies at P84–H94. Positions K757–S761 match the 'KMSKS' region motif. ATP is bound at residue K760.

The protein belongs to the class-I aminoacyl-tRNA synthetase family.

It is found in the cytoplasm. The enzyme catalyses tRNA(Leu) + L-leucine + ATP = L-leucyl-tRNA(Leu) + AMP + diphosphate. The sequence is that of Leucine--tRNA ligase, cytoplasmic (leu-6) from Neurospora crassa (strain ATCC 24698 / 74-OR23-1A / CBS 708.71 / DSM 1257 / FGSC 987).